Here is a 234-residue protein sequence, read N- to C-terminus: Serum amyloid P-component (234 aa).

A signal peptide spans Met1–Ala22. The Pentraxin (PTX) domain maps to Thr27–Ala226. An N-linked (GlcNAc...) asparagine glycan is attached at Asn54. A disulfide bond links Cys58 and Cys117. Asn81, Glu158, Gln159, Asp160, and Gln170 together coordinate Ca(2+).

This sequence belongs to the pentraxin family. As to quaternary structure, homopentamer. Pentraxin (or pentaxin) have a discoid arrangement of 5 non-covalently bound subunits. The cofactor is Ca(2+).

The protein resides in the secreted. The polypeptide is Serum amyloid P-component (APCS) (Mesocricetus auratus (Golden hamster)).